Here is a 558-residue protein sequence, read N- to C-terminus: Membrane protein insertase YidC (558 aa).

Transmembrane regions (helical) follow at residues 3-23 (IKRT…FDNW), 364-384 (FVGN…AVFF), 438-458 (LPVV…LASV), 477-497 (PYFI…KLNP), and 508-528 (MMFM…GLVL).

It belongs to the OXA1/ALB3/YidC family. Type 1 subfamily. In terms of assembly, interacts with the Sec translocase complex via SecD. Specifically interacts with transmembrane segments of nascent integral membrane proteins during membrane integration.

It is found in the cell inner membrane. Its function is as follows. Required for the insertion and/or proper folding and/or complex formation of integral membrane proteins into the membrane. Involved in integration of membrane proteins that insert both dependently and independently of the Sec translocase complex, as well as at least some lipoproteins. Aids folding of multispanning membrane proteins. This is Membrane protein insertase YidC from Burkholderia pseudomallei (strain K96243).